Reading from the N-terminus, the 414-residue chain is MSGIIATYLIHDDSHNLEKKAEQIALGLTIGSWTHLPHLLQEQLKQHKGNVLHVEELAEHEHTNSYLRKKVKRGIIKIEYPLLNFSPDLPAILTTTFGKLSLDGEVKLIDLTFSDELKKHFPGPKFGIDGIRNLLQVHDRPLLMSIFKGMIGRNIGYLKTQLRDQAIGGVDIVKDDEILFENALTPLTNRIVSGKEVLQSVYETYGHKTLYAVNVTGRTFDLKENAKRAVQAGADILLFNVFAYGLDVLQSLAEDDEIPVPIMAHPAVSGAYSASKLYGISSPLLLGKLLRYAGADFSLFPSPYGSVALEKEEALAISKYLTEDDVFFKKSFSVPSAGIHPGFVPFIIRDFGKDVVINAGGGIHGHPNGAQGGGKAFRTAIDATLQNKPLHEVDDINLHSALQIWGNPSHEVKL.

Lys99 serves as the catalytic Proton acceptor. Substrate contacts are provided by residues Lys148, 174–177 (KDDE), His265, Gly338, and 360–361 (GG). Mg(2+) is bound by residues Lys174, Asp176, and Glu177. The residue at position 174 (Lys174) is an N6-carboxylysine.

This sequence belongs to the RuBisCO large chain family. Type IV subfamily. In terms of assembly, homodimer. The cofactor is Mg(2+).

It catalyses the reaction 5-methylsulfanyl-2,3-dioxopentyl phosphate = 2-hydroxy-5-methylsulfanyl-3-oxopent-1-enyl phosphate. It participates in amino-acid biosynthesis; L-methionine biosynthesis via salvage pathway; L-methionine from S-methyl-5-thio-alpha-D-ribose 1-phosphate: step 3/6. Catalyzes the enolization of 2,3-diketo-5-methylthiopentyl-1-phosphate (DK-MTP-1-P) into 2-hydroxy-3-keto-5-methylthiopentenyl-1-phosphate (HK-MTPenyl-1-P). The chain is 2,3-diketo-5-methylthiopentyl-1-phosphate enolase from Bacillus anthracis (strain CDC 684 / NRRL 3495).